The sequence spans 219 residues: ATP synthase F(0) complex subunit a (219 aa).

6 helical membrane-spanning segments follow: residues 4–24, 61–81, 90–110, 124–144, 172–192, and 194–214; these read PTYLGIPLIAVALTLPWILFP, WAALLTSLMLFLITLNMLGLL, QLSLNMGLAVPLWLATVIIGM, EGTPVPLIPVLIIIETISLFI, FVLLPLMPTVAILTSIVLFLL, and LLEIAVAMIQAYVFVLLLSLY.

Belongs to the ATPase A chain family. Component of the ATP synthase complex composed at least of ATP5F1A/subunit alpha, ATP5F1B/subunit beta, ATP5MC1/subunit c (homooctomer), MT-ATP6/subunit a, MT-ATP8/subunit 8, ATP5ME/subunit e, ATP5MF/subunit f, ATP5MG/subunit g, ATP5MK/subunit k, ATP5MJ/subunit j, ATP5F1C/subunit gamma, ATP5F1D/subunit delta, ATP5F1E/subunit epsilon, ATP5PF/subunit F6, ATP5PB/subunit b, ATP5PD/subunit d, ATP5PO/subunit OSCP. ATP synthase complex consists of a soluble F(1) head domain (subunits alpha(3) and beta(3)) - the catalytic core - and a membrane F(0) domain - the membrane proton channel (subunits c, a, 8, e, f, g, k and j). These two domains are linked by a central stalk (subunits gamma, delta, and epsilon) rotating inside the F1 region and a stationary peripheral stalk (subunits F6, b, d, and OSCP). Interacts with DNAJC30; interaction is direct.

The protein resides in the mitochondrion inner membrane. The catalysed reaction is H(+)(in) = H(+)(out). Subunit a, of the mitochondrial membrane ATP synthase complex (F(1)F(0) ATP synthase or Complex V) that produces ATP from ADP in the presence of a proton gradient across the membrane which is generated by electron transport complexes of the respiratory chain. ATP synthase complex consist of a soluble F(1) head domain - the catalytic core - and a membrane F(1) domain - the membrane proton channel. These two domains are linked by a central stalk rotating inside the F(1) region and a stationary peripheral stalk. During catalysis, ATP synthesis in the catalytic domain of F(1) is coupled via a rotary mechanism of the central stalk subunits to proton translocation. With the subunit c (ATP5MC1), forms the proton-conducting channel in the F(0) domain, that contains two crucial half-channels (inlet and outlet) that facilitate proton movement from the mitochondrial intermembrane space (IMS) into the matrix. Protons are taken up via the inlet half-channel and released through the outlet half-channel, following a Grotthuss mechanism. This chain is ATP synthase F(0) complex subunit a, found in Oncorhynchus masou (Cherry salmon).